Consider the following 426-residue polypeptide: MATIEFIEAREILDSRGNPTVEVEMILDDGTQARAAVPSGASTGQFEAVELRDGDKKRYSGKGVLKAVENVNEKIAEEVLGCDASEQRIIDQIMIELDGSDNKGKLGANAILGVSLAAAHAAADCAELPLYQYLGGPNSHVLPVPMMNILNGGAHADSDVDIQEFMIAPIGAESFKQAYEWGAAVYHSLKKVLKDKGLATGLGDEGGFAPNLPSNAAALDLILDAIKAAGFEPGKDVALALDVAASEFFEDGKYTFEGQAKTSAEMIAYYEGLIAKYPLVSIEDPLDEEDWDGWAEFTKKLGEKIQIVGDDLFVTNPKRLAKGIETKAANALLVKVNQIGSLSETIDAVELAHRNGYRCMMSHRSGETEDTTIADLAVALSTGQIKSGAPARGERIAKYNQLLRIEEELGDSAEYAGASAFPRFQA.

Gln163 contributes to the (2R)-2-phosphoglycerate binding site. Catalysis depends on Glu205, which acts as the Proton donor. Residues Asp242, Glu283, and Asp310 each contribute to the Mg(2+) site. 4 residues coordinate (2R)-2-phosphoglycerate: Lys335, Arg364, Ser365, and Lys386. The active-site Proton acceptor is Lys335.

It belongs to the enolase family. It depends on Mg(2+) as a cofactor.

It is found in the cytoplasm. Its subcellular location is the secreted. The protein resides in the cell surface. The catalysed reaction is (2R)-2-phosphoglycerate = phosphoenolpyruvate + H2O. Its pathway is carbohydrate degradation; glycolysis; pyruvate from D-glyceraldehyde 3-phosphate: step 4/5. Catalyzes the reversible conversion of 2-phosphoglycerate (2-PG) into phosphoenolpyruvate (PEP). It is essential for the degradation of carbohydrates via glycolysis. The protein is Enolase of Cutibacterium acnes (strain DSM 16379 / KPA171202) (Propionibacterium acnes).